A 350-amino-acid chain; its full sequence is Arginine/serine-rich coiled-coil protein 2 (350 aa).

Disordered stretches follow at residues 1-146 (MIRT…FRGR) and 328-350 (SQTHTQRGMGLGFTSSMRGMDAV). A compositionally biased stretch (basic residues) spans 10–24 (QARRHEVKAKSSKKH). Residues 25–51 (RSDDTVDRDHSDKIRDRLNSSENGDEK) show a composition bias toward basic and acidic residues. Over residues 52–132 (HRRKEKRSSR…IEKPRRHSRS (81 aa)) the composition is skewed to basic residues. Residues 146–187 (RNAAMDAQEALARRLERAKKLQEQREKESAEKQQEIAAVAAA) are a coiled coil.

This sequence belongs to the RSRC2 family.

In Xenopus laevis (African clawed frog), this protein is Arginine/serine-rich coiled-coil protein 2 (rsrc2).